The following is a 231-amino-acid chain: Ion-translocating oxidoreductase complex subunit E (231 aa).

6 consecutive transmembrane segments (helical) span residues 18–38 (ALVQLLGLCPLLAVTSTATNA), 39–59 (LGLGLATTLVLTLTNLTISTL), 63–83 (TPAEIRIPIYVMIIASVVSAV), 86–106 (LINAYAFGLYQSLGIFIPLIV), 125–145 (ALSALDGFSIGMGATCAMFVL), and 182–202 (PFLLAMLPPSAFIGLGLMLAG).

The protein belongs to the NqrDE/RnfAE family. As to quaternary structure, the complex is composed of six subunits: RsxA, RsxB, RsxC, RsxD, RsxE and RsxG.

The protein localises to the cell inner membrane. Part of a membrane-bound complex that couples electron transfer with translocation of ions across the membrane. Required to maintain the reduced state of SoxR. This is Ion-translocating oxidoreductase complex subunit E from Escherichia coli O7:K1 (strain IAI39 / ExPEC).